We begin with the raw amino-acid sequence, 157 residues long: Peptide methionine sulfoxide reductase MsrA (157 aa).

The active site involves cysteine 10.

The protein belongs to the MsrA Met sulfoxide reductase family.

It catalyses the reaction L-methionyl-[protein] + [thioredoxin]-disulfide + H2O = L-methionyl-(S)-S-oxide-[protein] + [thioredoxin]-dithiol. The enzyme catalyses [thioredoxin]-disulfide + L-methionine + H2O = L-methionine (S)-S-oxide + [thioredoxin]-dithiol. In terms of biological role, has an important function as a repair enzyme for proteins that have been inactivated by oxidation. Catalyzes the reversible oxidation-reduction of methionine sulfoxide in proteins to methionine. The protein is Peptide methionine sulfoxide reductase MsrA of Clostridium botulinum (strain Kyoto / Type A2).